The sequence spans 78 residues: DAGNRIAAPACVHFTADWRYTFVTNDCSIDYSVTVAYGDGTDVPCRSANPGDILTFPGYGTRGNEVLGAVLCATDGSA.

Intrachain disulfides connect cysteine 11/cysteine 27 and cysteine 45/cysteine 72.

Inhibits mammalian alpha-amylases specifically but has no action on plant and microbial alpha-amylases. The sequence is that of Alpha-amylase inhibitor Haim-1 from Streptomyces griseosporeus.